The following is a 154-amino-acid chain: Sperm microtubule associated protein 1 (154 aa).

The chain is Sperm microtubule associated protein 1 from Homo sapiens (Human).